Reading from the N-terminus, the 154-residue chain is MLKRTSFVSSLFISSAVLLSILLPSGQAHAQSASIEAKTVNSTKEWTISDIEVTYKPNAVLSLGAVEFQFPDGFHATTRDSVNGRTLKETQILNDGKTVRLPLTLDLLGASEFDLVMVRKTLPRAGTYTIKGDVVNGLGIGSFYAETQLVIDPR.

The signal sequence occupies residues 1–30; the sequence is MLKRTSFVSSLFISSAVLLSILLPSGQAHA.

It belongs to the BslA/BslB family. As to quaternary structure, monomer in vitro.

The protein localises to the secreted. In terms of biological role, has a minor role in biofilm architecture. May contribute to the surface hydrophobicity. In Bacillus subtilis (strain 168), this protein is Probable biofilm-surface layer protein B.